Consider the following 325-residue polypeptide: Gamma-hemolysin component B (325 aa).

The first 25 residues, 1 to 25 (MNMNKLVKSSVATSMALLLLSNTAN), serve as a signal peptide directing secretion.

The protein belongs to the aerolysin family. Toxicity requires sequential binding and synergistic association of a class S and a class F component which form heterooligomeric complexes. HlgB (class F) associates with either hlgA thus forming an AB toxin or with hlgC thus forming a CB toxin. Interacts with host AMFR.

Toxin that seems to act by forming pores in the membrane of the cell. Has a hemolytic and a leucotoxic activity. Promotes host AMFR-mediated inflammation by mediating 'Lys-27'-linked ubiquitination of TAB3, TAK1-TAB3 complex formation and phosphorylation of TAK1/MAP3K7. In turn, activates host NF-kappa-B signaling pathway. The polypeptide is Gamma-hemolysin component B (hlgB) (Staphylococcus aureus (strain MRSA252)).